A 230-amino-acid polypeptide reads, in one-letter code: Ribosome-recycling factor, mitochondrial (230 aa).

A mitochondrion-targeting transit peptide spans M1–S24.

It belongs to the RRF family.

It localises to the mitochondrion. Its function is as follows. Necessary for protein synthesis in mitochondria. Functions as a ribosome recycling factor in mitochondria. The sequence is that of Ribosome-recycling factor, mitochondrial (RRF1) from Saccharomyces cerevisiae (strain ATCC 204508 / S288c) (Baker's yeast).